We begin with the raw amino-acid sequence, 570 residues long: Apyrase (570 aa).

A signal peptide spans 1 to 23 (MALVRFATIITVLCHLAIQDGAA). A divalent metal cation-binding residues include Asp43, His45, and Asp94. The N-linked (GlcNAc...) asparagine glycan is linked to Asn108. A divalent metal cation-binding residues include Asn126, His229, and His253. Residues Asn287 and Asn326 are each glycosylated (N-linked (GlcNAc...) asparagine). Residue Arg367 coordinates AMP. N-linked (GlcNAc...) asparagine glycosylation occurs at Asn387. Positions 402 and 507 each coordinate AMP. N-linked (GlcNAc...) asparagine glycans are attached at residues Asn552 and Asn555.

The protein belongs to the 5'-nucleotidase family. In terms of assembly, interacts with human PLAT; the interaction results in PLAT activation probably via an allosteric activation mechanism. A divalent metal cation serves as cofactor. As to expression, saliva (at protein level). Salivary gland (at protein level). Not detected in midgut.

The protein localises to the secreted. The catalysed reaction is a ribonucleoside 5'-triphosphate + 2 H2O = a ribonucleoside 5'-phosphate + 2 phosphate + 2 H(+). Its function is as follows. Cleaves adenosine triphosphate (ATP) and adenosine diphosphate (ADP) to adenosine monophosphate (AMP) and inorganic phosphate. Enhances fibrin degradation in the midgut blood bolus. Activates human tissue plasminogen activator (PLAT), probably via an allosteric activation mechanism. Inhibits ADP-mediated host platelet aggregation in vitro and in mosquito midgut. Inhibits host neutrophil activation in the mosquito midgut: reduces neutrophil extracellular traps formation in the presence of platelets and the formation of total cell- and mitochondrial-derived reactive oxygen species. Functionally, (Microbial infection) Promotes Plasmodium berghei parasite transmission from the mammalian host to the mosquito probably by reducing the blood bolus viscosity. Facilitates sporozoite transmission from the mosquito to the mammalian host during blood feeding. This is Apyrase from Anopheles gambiae (African malaria mosquito).